A 649-amino-acid chain; its full sequence is Stress-70 protein, mitochondrial (649 aa).

The transit peptide at 1–46 directs the protein to the mitochondrion; it reads MISASRAAAARLVGAAASRGPTAARHKDGWNGLSHEAFRIVSRRDY. The segment at 1–432 is interaction with NFS1; the sequence is MISASRAAAA…IQGGVLAGDV (432 aa). 2 residues coordinate ADP: threonine 63 and asparagine 64. A nucleotide-binding domain (NBD) region spans residues 63–431; it reads TNSCVAVMEG…AIQGGVLAGD (369 aa). Residue lysine 76 is modified to N6-acetyllysine. Threonine 87 is subject to Phosphothreonine. Lysine 135 and lysine 138 each carry N6-acetyllysine; alternate. N6-succinyllysine; alternate occurs at positions 135 and 138. Residue lysine 143 is modified to N6-acetyllysine. The residue at position 206 (lysine 206) is an N6-acetyllysine; alternate. Residue lysine 206 is modified to N6-succinyllysine; alternate. Lysine 206 is subject to N6-malonyllysine; alternate. Residues lysine 234 and lysine 288 each carry the N6-acetyllysine modification. At lysine 300 the chain carries N6-acetyllysine; alternate. Lysine 300 is modified (N6-succinyllysine; alternate). Glutamate 313, lysine 316, and serine 320 together coordinate ADP. Position 368 is an N6-succinyllysine (lysine 368). The ADP site is built by glycine 388 and arginine 391. The residue at position 394 (lysine 394) is an N6-succinyllysine. Serine 408 is modified (phosphoserine). The interdomain linker stretch occupies residues 432-441; sequence VTDVLLLDVT. N6-acetyllysine; alternate occurs at positions 565, 598, and 638. Lysine 565, lysine 598, and lysine 638 each carry N6-succinyllysine; alternate.

This sequence belongs to the heat shock protein 70 family. Interacts strongly with the intermediate form of FXN and weakly with its mature form. Interacts with HSCB. Associates with the mitochondrial contact site and cristae organizing system (MICOS) complex, composed of at least MICOS10/MIC10, CHCHD3/MIC19, CHCHD6/MIC25, APOOL/MIC27, IMMT/MIC60, APOO/MIC23/MIC26 and QIL1/MIC13. This complex was also known under the names MINOS or MitOS complex. The MICOS complex associates with mitochondrial outer membrane proteins SAMM50, MTX1, MTX2 and DNAJC11, mitochondrial inner membrane protein TMEM11 and with HSPA9. Interacts with DNLZ, the interaction is required to prevent self-aggregation. Interacts with TESPA1. Interacts with PDPN. Interacts with NFU1, NFS1 and ISCU. Interacts with TP53; the interaction promotes TP53 degradation. Interacts (via SBD domain) with UBXN2A; the interaction with UBXN2A inhibits HSPA9/MOT-2 interaction with and degradation of TP53, thereby promotes TP53 translocation to the nucleus. Interacts with ITPR1 AND VDAC1; this interaction couples ITPR1 to VDAC1. Component of the TIM23 mitochondrial inner membrane pre-sequence translocase complex.

The protein resides in the mitochondrion. The protein localises to the nucleus. It is found in the nucleolus. Its subcellular location is the cytoplasm. It localises to the mitochondrion matrix. It catalyses the reaction ATP + H2O = ADP + phosphate + H(+). Its activity is regulated as follows. The chaperone activity is regulated by ATP-induced allosteric coupling of the nucleotide-binding (NBD) and substrate-binding (SBD) domains. ATP binding in the NBD leads to a conformational change in the NBD, which is transferred through the interdomain linker (IDL) to the substrate-binding domain (SBD). This elicits a reduced substrate affinity and a faster substrate exchange rate. Upon hydrolysis of ATP to ADP, the protein undergoes a conformational change that increases its affinity for substrate proteins. It cycles through repeated phases of ATP hydrolysis and nucleotide exchange, facilitating repeated cycles of substrate binding and release. Functions in collaboration with co-chaperones. Functions with the co-chaperone, DNLZ, to maintain solubility and regulate ATP hydrolysis. Nucleotide exchange factors, GRPEL1 and GRPEL2, accelerate nucleotide exchange. Functionally, mitochondrial chaperone that plays a key role in mitochondrial protein import, folding, and assembly. Plays an essential role in the protein quality control system, the correct folding of proteins, the re-folding of misfolded proteins, and the targeting of proteins for subsequent degradation. These processes are achieved through cycles of ATP binding, ATP hydrolysis, and ADP release, mediated by co-chaperones. In mitochondria, it associates with the TIM (translocase of the inner membrane) protein complex to assist in the import and folding of mitochondrial proteins. Plays an important role in mitochondrial iron-sulfur cluster (ISC) biogenesis, interacts with and stabilizes ISC cluster assembly proteins FXN, NFU1, NFS1 and ISCU. Regulates erythropoiesis via stabilization of ISC assembly. Regulates mitochondrial calcium-dependent apoptosis by coupling two calcium channels, ITPR1 and VDAC1, at the mitochondria-associated endoplasmic reticulum (ER) membrane to facilitate calcium transport from the ER lumen to the mitochondria intermembrane space, providing calcium for the downstream calcium channel MCU, which releases it into the mitochondrial matrix. Although primarily located in the mitochondria, it is also found in other cellular compartments. In the cytosol, it associates with proteins involved in signaling, apoptosis, or senescence. It may play a role in cell cycle regulation via its interaction with and promotion of degradation of TP53. May play a role in the control of cell proliferation and cellular aging. Protects against reactive oxygen species (ROS). Extracellular HSPA9 plays a cytoprotective role by preventing cell lysis following immune attack by the membrane attack complex by disrupting formation of the complex. The protein is Stress-70 protein, mitochondrial of Canis lupus familiaris (Dog).